A 542-amino-acid polypeptide reads, in one-letter code: Chaperonin GroEL 3 (542 aa).

ATP contacts are provided by residues 29–32, 86–90, glycine 413, 477–479, and aspartate 493; these read TLGP, DGTTT, and NAA.

The protein belongs to the chaperonin (HSP60) family. As to quaternary structure, forms a cylinder of 14 subunits composed of two heptameric rings stacked back-to-back. Interacts with the co-chaperonin GroES.

Its subcellular location is the cytoplasm. It catalyses the reaction ATP + H2O + a folded polypeptide = ADP + phosphate + an unfolded polypeptide.. Together with its co-chaperonin GroES, plays an essential role in assisting protein folding. The GroEL-GroES system forms a nano-cage that allows encapsulation of the non-native substrate proteins and provides a physical environment optimized to promote and accelerate protein folding. The chain is Chaperonin GroEL 3 from Frankia alni (strain DSM 45986 / CECT 9034 / ACN14a).